The chain runs to 426 residues: Chromatin structure-remodeling complex subunit SFH1 (426 aa).

S78 is modified (phosphoserine). Residues 201–242 are interaction with STH1; sequence AIMIPITLDIEHMGHTIKDQFLWNYNDDSISPEEFASIYCKD.

The protein belongs to the SNF5 family. As to quaternary structure, interacts directly with STH1. Component of the two forms of the RSC complex composed of at least either RSC1 or RSC2, and ARP7, ARP9, LDB7, NPL6, RSC3, RSC30, RSC4, RSC58, RSC6, RSC8, RSC9, SFH1, STH1, HTL1 and probably RTT102. The complexes interact with histone and histone variant components of centromeric chromatin. Phosphorylated in the G1 phase.

The protein resides in the nucleus. Its function is as follows. Component of the chromatin structure-remodeling complex (RSC), which is involved in transcription regulation and nucleosome positioning. RSC is responsible for the transfer of a histone octamer from a nucleosome core particle to naked DNA. The reaction requires ATP and involves an activated RSC-nucleosome intermediate. Remodeling reaction also involves DNA translocation, DNA twist and conformational change. As a reconfigurer of centromeric and flanking nucleosomes, RSC complex is required both for proper kinetochore function in chromosome segregation and, via a PKC1-dependent signaling pathway, for organization of the cellular cytoskeleton. This subunit is essential for mitotic growth and required for cell cycle progression. This chain is Chromatin structure-remodeling complex subunit SFH1 (SFH1), found in Saccharomyces cerevisiae (strain ATCC 204508 / S288c) (Baker's yeast).